The primary structure comprises 85 residues: Large ribosomal subunit protein bL31B (85 aa).

Belongs to the bacterial ribosomal protein bL31 family. Type B subfamily. As to quaternary structure, part of the 50S ribosomal subunit.

The polypeptide is Large ribosomal subunit protein bL31B (Kocuria rhizophila (strain ATCC 9341 / DSM 348 / NBRC 103217 / DC2201)).